Reading from the N-terminus, the 488-residue chain is Mannitol 2-dehydrogenase (488 aa).

37-48 (IVHVGVGGFHRA) is an NAD(+) binding site.

Belongs to the mannitol dehydrogenase family. Monomer.

It carries out the reaction D-mannitol + NAD(+) = D-fructose + NADH + H(+). Functionally, catalyzes the NAD(H)-dependent interconversion of D-fructose and D-mannitol in the mannitol metabolic pathway. This Aspergillus niger (strain ATCC MYA-4892 / CBS 513.88 / FGSC A1513) protein is Mannitol 2-dehydrogenase.